The primary structure comprises 627 residues: 1-deoxy-D-xylulose-5-phosphate synthase (627 aa).

Thiamine diphosphate is bound by residues His87 and 128–130 (GHS). Asp159 serves as a coordination point for Mg(2+). Residues 160 to 161 (GA), Asn188, Phe295, and Glu375 contribute to the thiamine diphosphate site. Residue Asn188 coordinates Mg(2+).

Belongs to the transketolase family. DXPS subfamily. Homodimer. Mg(2+) serves as cofactor. Requires thiamine diphosphate as cofactor.

It catalyses the reaction D-glyceraldehyde 3-phosphate + pyruvate + H(+) = 1-deoxy-D-xylulose 5-phosphate + CO2. The protein operates within metabolic intermediate biosynthesis; 1-deoxy-D-xylulose 5-phosphate biosynthesis; 1-deoxy-D-xylulose 5-phosphate from D-glyceraldehyde 3-phosphate and pyruvate: step 1/1. Catalyzes the acyloin condensation reaction between C atoms 2 and 3 of pyruvate and glyceraldehyde 3-phosphate to yield 1-deoxy-D-xylulose-5-phosphate (DXP). The protein is 1-deoxy-D-xylulose-5-phosphate synthase of Pseudomonas aeruginosa (strain LESB58).